We begin with the raw amino-acid sequence, 565 residues long: MSEQKLALNEYLKTDSDYLRGTIKEGLDSSVTGSFSDGDQQLIKFHGFYQQDDRDLRNERKEQKLEPLYSFMLRARVPGGVCTPKQWLGVDEIASTLTSSNSIRLTTRQTFQYHGIPKRNLKTIIQGLDREALDSIAACGDVNRNVMCNPNPVESKLHAQAYEVAKKLSDHLLPHTRAYAEIWLDEEKLLTTEDETVEPVYGKTYLPRKFKMAVAVPPDNDVDVYTNDLGFIAVAENGELVGFNLTAGGGMGSTHGEVETFPRLADDFGFIKTEDVMKFAEAVMTVQRDWGNRTNRKRSRLKYTIVDHGYEKFKAEVEARAGVKFEPKRDVVIGDRGDRYGWVEGVDGKWHLTLFIESGRIKDVPGKSLQTGMREIAKIHKGDFRMTSNQNMIIAGVAPEDKATIEGLARKHGLLGQVLTQTRGHSIACVALPTCPLAMAEAERYFPEFIDHIDALQAKNGISDQAIVVRMTGCPNGCARPFAAEIGLVGKAPGRYNLYLGANFEGTRLNKMYRENIQEAEILAELDALFARYAVERNAGETFGNFTVRTGVVKAVIDAAKDFHG.

Residues Cys429, Cys435, Cys474, and Cys478 each coordinate [4Fe-4S] cluster. A siroheme-binding site is contributed by Cys478.

It belongs to the nitrite and sulfite reductase 4Fe-4S domain family. In terms of assembly, alpha(8)-beta(8). The alpha component is a flavoprotein, the beta component is a hemoprotein. Siroheme serves as cofactor. Requires [4Fe-4S] cluster as cofactor.

It carries out the reaction hydrogen sulfide + 3 NADP(+) + 3 H2O = sulfite + 3 NADPH + 4 H(+). The protein operates within sulfur metabolism; hydrogen sulfide biosynthesis; hydrogen sulfide from sulfite (NADPH route): step 1/1. Its function is as follows. Component of the sulfite reductase complex that catalyzes the 6-electron reduction of sulfite to sulfide. This is one of several activities required for the biosynthesis of L-cysteine from sulfate. This chain is Sulfite reductase [NADPH] hemoprotein beta-component, found in Shewanella sp. (strain MR-7).